We begin with the raw amino-acid sequence, 202 residues long: Transmembrane protein 223 (202 aa).

Residues 1–43 (MAAPGRRWSVLLFRALQSLSARRALHDTAPPRDVLLFEHERGR) are Mitochondrial matrix-facing. Residues 44-64 (FFAVLGLFCAGQGVFWASLAI) form a helical membrane-spanning segment. Residues 65–97 (ASLARPPTPVRPTDAKTPDHGGLDLRSTLWRYG) lie on the Mitochondrial intermembrane side of the membrane. The chain crosses the membrane as a helical span at residues 98–118 (LAVGCGAIGSLVLGAGLLFSL). Topologically, residues 119-202 (RSVRSVMLRA…DNTVGAYRSL (84 aa)) are mitochondrial matrix.

It belongs to the TMEM223 family. As to quaternary structure, associates with the mitochondrial ribosome.

The protein localises to the mitochondrion inner membrane. Mitochondrial ribosome-associated protein involved in the first steps of cytochrome c oxidase complex (complex IV) biogenesis. Stimulates the translation of MT-CO1 mRNA and is a constituent of early MT-CO1 assembly intermediates. The chain is Transmembrane protein 223 from Bos taurus (Bovine).